The chain runs to 278 residues: Sulfur carrier protein FdhD (278 aa).

Cys121 (cysteine persulfide intermediate) is an active-site residue. Phe260–Arg265 contacts Mo-bis(molybdopterin guanine dinucleotide).

The protein belongs to the FdhD family.

It is found in the cytoplasm. In terms of biological role, required for formate dehydrogenase (FDH) activity. Acts as a sulfur carrier protein that transfers sulfur from IscS to the molybdenum cofactor prior to its insertion into FDH. In Salmonella choleraesuis (strain SC-B67), this protein is Sulfur carrier protein FdhD.